The sequence spans 343 residues: Hydroxymethylglutaryl-CoA synthase (343 aa).

(3S)-3-hydroxy-3-methylglutaryl-CoA is bound by residues D28 and A29. E80 serves as the catalytic Proton donor/acceptor. C112 contributes to the (3S)-3-hydroxy-3-methylglutaryl-CoA binding site. The active-site Acyl-thioester intermediate is the C112. A CoA-binding site is contributed by R198. T200 and H233 together coordinate (3S)-3-hydroxy-3-methylglutaryl-CoA. H233 (proton donor/acceptor) is an active-site residue. Position 238 (K238) interacts with CoA. (3S)-3-hydroxy-3-methylglutaryl-CoA contacts are provided by R242, N265, and S295.

The protein belongs to the thiolase-like superfamily. Archaeal HMG-CoA synthase family. Interacts with acetoacetyl-CoA thiolase that catalyzes the precedent step in the pathway and with a DUF35 protein. The acetoacetyl-CoA thiolase/HMG-CoA synthase complex channels the intermediate via a fused CoA-binding site, which allows for efficient coupling of the endergonic thiolase reaction with the exergonic HMGCS reaction.

The catalysed reaction is acetoacetyl-CoA + acetyl-CoA + H2O = (3S)-3-hydroxy-3-methylglutaryl-CoA + CoA + H(+). It functions in the pathway metabolic intermediate biosynthesis; (R)-mevalonate biosynthesis; (R)-mevalonate from acetyl-CoA: step 2/3. In terms of biological role, catalyzes the condensation of acetyl-CoA with acetoacetyl-CoA to form 3-hydroxy-3-methylglutaryl-CoA (HMG-CoA). Functions in the mevalonate (MVA) pathway leading to isopentenyl diphosphate (IPP), a key precursor for the biosynthesis of isoprenoid compounds that are building blocks of archaeal membrane lipids. The polypeptide is Hydroxymethylglutaryl-CoA synthase (Archaeoglobus fulgidus (strain ATCC 49558 / DSM 4304 / JCM 9628 / NBRC 100126 / VC-16)).